The following is a 257-amino-acid chain: Glutamate racemase (257 aa).

Substrate-binding positions include 12-13 and 44-45; these read DS and YG. Residue C75 is the Proton donor/acceptor of the active site. Residue 76-77 coordinates substrate; it reads NT. C185 (proton donor/acceptor) is an active-site residue. Substrate is bound at residue 186-187; that stretch reads TH.

This sequence belongs to the aspartate/glutamate racemases family.

It carries out the reaction L-glutamate = D-glutamate. It functions in the pathway cell wall biogenesis; peptidoglycan biosynthesis. Functionally, provides the (R)-glutamate required for cell wall biosynthesis. In Clostridium botulinum (strain 657 / Type Ba4), this protein is Glutamate racemase.